Consider the following 197-residue polypeptide: MLSSLAPYMANPRQTLTQVLNFALVLSTAFMLWKGLSVVTNSTSPIVVVLSGSMEPAFQRGDLLFLWNRSPRVDVGEIVVYNVRGKDIPIVHRVMRSFPELPGREDKKSVKKGGEEGEETSSTPSQKLLTKGDNNMADDTELYAQGQEYLDRKEDIVGSVRGYVPGVGYVTILLSEHPWLRSVLLGFMGLMVVLQRE.

Residues 1–14 are Cytoplasmic-facing; the sequence is MLSSLAPYMANPRQ. Residues 15–33 traverse the membrane as a helical; Signal-anchor for type II membrane protein segment; that stretch reads TLTQVLNFALVLSTAFMLW. The Lumenal portion of the chain corresponds to 34 to 197; that stretch reads KGLSVVTNST…MGLMVVLQRE (164 aa). A glycan (N-linked (GlcNAc...) asparagine) is linked at N41. Catalysis depends on charge relay system residues S53 and H92. Residues 102–115 show a composition bias toward basic and acidic residues; it reads PGREDKKSVKKGGE. Positions 102-134 are disordered; it reads PGREDKKSVKKGGEEGEETSSTPSQKLLTKGDN. The active-site Charge relay system is D139. The segment at 183–194 is C-terminal short (CTS) helix; the sequence is VLLGFMGLMVVL.

The protein belongs to the peptidase S26B family. In terms of assembly, component of the signal peptidase complex (SPC) composed of a catalytic subunit SEC11 and three accessory subunits SPC1, SPC2 and SPC3. The complex induces a local thinning of the ER membrane which is used to measure the length of the signal peptide (SP) h-region of protein substrates. This ensures the selectivity of the complex towards h-regions shorter than 18-20 amino acids. SPC associates with the translocon complex.

The protein localises to the endoplasmic reticulum membrane. The enzyme catalyses Cleavage of hydrophobic, N-terminal signal or leader sequences from secreted and periplasmic proteins.. Its function is as follows. Catalytic component of the signal peptidase complex (SPC) which catalyzes the cleavage of N-terminal signal sequences from nascent proteins as they are translocated into the lumen of the endoplasmic reticulum. Specifically cleaves N-terminal signal peptides that contain a hydrophobic alpha-helix (h-region) shorter than 18-20 amino acids. In Paracoccidioides lutzii (strain ATCC MYA-826 / Pb01) (Paracoccidioides brasiliensis), this protein is Signal peptidase complex catalytic subunit SEC11 (SEC11).